Consider the following 353-residue polypeptide: Mitochondrial import inner membrane translocase subunit TIM50 (353 aa).

Residues 1-21 constitute a mitochondrion transit peptide; the sequence is MAASAALFSRLRSGLRVGARG. The Mitochondrial matrix portion of the chain corresponds to 22-65; sequence LCTRLAPPPPRTPEQVTEIANRGGSKAQGPQHQPGSEGPSYAKK. The interval 24 to 59 is disordered; it reads TRLAPPPPRTPEQVTEIANRGGSKAQGPQHQPGSEG. The chain crosses the membrane as a helical span at residues 66 to 86; sequence IALWIAGLLGAGGTVSIVYIF. Over 87–353 the chain is Mitochondrial intermembrane; sequence GNNPVDENGT…SRLWPRSKQP (267 aa). In terms of domain architecture, FCP1 homology spans 143–286; sequence YYQPPYTLVL…LDLSAFLKTI (144 aa). A Phosphoserine modification is found at Ser341.

This sequence belongs to the TIM50 family. Component of the TIM23 complex at least composed of TIMM23, TIMM17 (TIMM17A or TIMM17B) and TIMM50; within this complex, directly interacts with TIMM23. The complex interacts with the TIMM44 component of the PAM complex and with DNAJC15.

It localises to the mitochondrion inner membrane. Essential component of the TIM23 complex, a complex that mediates the translocation of transit peptide-containing proteins across the mitochondrial inner membrane. Has some phosphatase activity in vitro; however such activity may not be relevant in vivo. The protein is Mitochondrial import inner membrane translocase subunit TIM50 (Timm50) of Mus musculus (Mouse).